The primary structure comprises 481 residues: Argininosuccinate lyase (481 aa).

The protein belongs to the lyase 1 family. Argininosuccinate lyase subfamily.

It localises to the cytoplasm. The catalysed reaction is 2-(N(omega)-L-arginino)succinate = fumarate + L-arginine. It functions in the pathway amino-acid biosynthesis; L-arginine biosynthesis; L-arginine from L-ornithine and carbamoyl phosphate: step 3/3. The polypeptide is Argininosuccinate lyase (Methanococcus maripaludis (strain C5 / ATCC BAA-1333)).